Reading from the N-terminus, the 690-residue chain is Elongation factor G (690 aa).

The 275-residue stretch at 8–282 (KMTRNIGIMA…AVIDYLPSPL (275 aa)) folds into the tr-type G domain. Residues 17 to 24 (AHIDAGKT), 81 to 85 (DTPGH), and 135 to 138 (NKMD) contribute to the GTP site.

It belongs to the TRAFAC class translation factor GTPase superfamily. Classic translation factor GTPase family. EF-G/EF-2 subfamily.

The protein resides in the cytoplasm. Functionally, catalyzes the GTP-dependent ribosomal translocation step during translation elongation. During this step, the ribosome changes from the pre-translocational (PRE) to the post-translocational (POST) state as the newly formed A-site-bound peptidyl-tRNA and P-site-bound deacylated tRNA move to the P and E sites, respectively. Catalyzes the coordinated movement of the two tRNA molecules, the mRNA and conformational changes in the ribosome. The sequence is that of Elongation factor G from Acholeplasma laidlawii (strain PG-8A).